We begin with the raw amino-acid sequence, 232 residues long: tRNA (guanine-N(1)-)-methyltransferase (232 aa).

Residues glycine 111 and 131–136 contribute to the S-adenosyl-L-methionine site; that span reads IGDYIL.

Belongs to the RNA methyltransferase TrmD family. As to quaternary structure, homodimer.

It is found in the cytoplasm. The catalysed reaction is guanosine(37) in tRNA + S-adenosyl-L-methionine = N(1)-methylguanosine(37) in tRNA + S-adenosyl-L-homocysteine + H(+). Functionally, specifically methylates guanosine-37 in various tRNAs. The polypeptide is tRNA (guanine-N(1)-)-methyltransferase (Bartonella henselae (strain ATCC 49882 / DSM 28221 / CCUG 30454 / Houston 1) (Rochalimaea henselae)).